Here is a 404-residue protein sequence, read N- to C-terminus: MRFISASSLLLALAPTLNAVPVEVAGSAQGLDVTLSQVGNTRIKAVVKNTGSEDVTFVHLNFFKDAAPVQKVSLFRNGMLPNLNLATTEVQFQGIKQRLITEGLSDDALTTLAPGATIEDEFDIASTSDLSEGGTITINSNGLVPITTDNKVTGYIPFTSNELSIDVDAAEAASVTQAVKILERRTKVTSCSGSRLSALQTALRNTVSLARAAATAAQSGSSSRFQEYFKTTSSSTRSTVAARLNAVANEAASTSSGSTTYYCSDVYGYCSSNVLAYTLPSYNIIANCDLYYSYLPALTSTCHAQDQATTTLHEFTHAPGVYSPGTDDLGYGYSAATALSASQALLNADTYALFANGTYSSLLSFVNPLLTPDNSCQPQLLDARTCNRQFGRSTSCKVYWKAVE.

The N-terminal stretch at 1–19 (MRFISASSLLLALAPTLNA) is a signal peptide. The propeptide occupies 20 to 185 (VPVEVAGSAQ…TQAVKILERR (166 aa)). Disulfide bonds link Cys191–Cys263 and Cys270–Cys288. His313 lines the Zn(2+) pocket. Glu314 is a catalytic residue. Zn(2+) is bound by residues His317 and Asp328.

The protein belongs to the peptidase M35 family. Zn(2+) is required as a cofactor.

The protein resides in the secreted. The catalysed reaction is Preferential cleavage of bonds with hydrophobic residues in P1'. Also 3-Asn-|-Gln-4 and 8-Gly-|-Ser-9 bonds in insulin B chain.. Its function is as follows. Secreted metalloproteinase that allows assimilation of proteinaceous substrates. Shows high activities on basic nuclear substrates such as histone and protamine. The polypeptide is Neutral protease 2 homolog AFLA_065450 (Aspergillus flavus (strain ATCC 200026 / FGSC A1120 / IAM 13836 / NRRL 3357 / JCM 12722 / SRRC 167)).